Here is a 62-residue protein sequence, read N- to C-terminus: Photosystem II reaction center protein Z (62 aa).

2 helical membrane-spanning segments follow: residues 8 to 28 (AVFA…VVLA) and 41 to 61 (FSGA…NSFI).

The protein belongs to the PsbZ family. PSII is composed of 1 copy each of membrane proteins PsbA, PsbB, PsbC, PsbD, PsbE, PsbF, PsbH, PsbI, PsbJ, PsbK, PsbL, PsbM, PsbT, PsbY, PsbZ, Psb30/Ycf12, at least 3 peripheral proteins of the oxygen-evolving complex and a large number of cofactors. It forms dimeric complexes.

Its subcellular location is the plastid. It is found in the chloroplast thylakoid membrane. May control the interaction of photosystem II (PSII) cores with the light-harvesting antenna, regulates electron flow through the 2 photosystem reaction centers. PSII is a light-driven water plastoquinone oxidoreductase, using light energy to abstract electrons from H(2)O, generating a proton gradient subsequently used for ATP formation. The chain is Photosystem II reaction center protein Z from Marchantia polymorpha (Common liverwort).